Here is a 76-residue protein sequence, read N- to C-terminus: Protein CYSTEINE-RICH TRANSMEMBRANE MODULE 11 (76 aa).

Residues 19–45 (GPPPPVGVPPQYYPPPPPPPPPPPPPR) are disordered. A helical membrane pass occupies residues 47–63 (VGFLEGLLAALCCCCLV).

The protein belongs to the CYSTM1 family. As to quaternary structure, heterodimers. Interacts with CYSTM6, CYSTM7 and WIH1/CYSTM13. In terms of tissue distribution, mostly expressed in stems, siliques, leaves and flowers and, to a lower extent, in roots.

It localises to the cell membrane. Its subcellular location is the cytoplasm. Involved in resistance to abiotic stress. The chain is Protein CYSTEINE-RICH TRANSMEMBRANE MODULE 11 from Arabidopsis thaliana (Mouse-ear cress).